A 343-amino-acid chain; its full sequence is Phosphoribosylformylglycinamidine cyclo-ligase (343 aa).

The protein belongs to the AIR synthase family.

It localises to the cytoplasm. It catalyses the reaction 2-formamido-N(1)-(5-O-phospho-beta-D-ribosyl)acetamidine + ATP = 5-amino-1-(5-phospho-beta-D-ribosyl)imidazole + ADP + phosphate + H(+). It participates in purine metabolism; IMP biosynthesis via de novo pathway; 5-amino-1-(5-phospho-D-ribosyl)imidazole from N(2)-formyl-N(1)-(5-phospho-D-ribosyl)glycinamide: step 2/2. In Rippkaea orientalis (strain PCC 8801 / RF-1) (Cyanothece sp. (strain PCC 8801)), this protein is Phosphoribosylformylglycinamidine cyclo-ligase.